A 407-amino-acid chain; its full sequence is Melanoma-associated antigen B6B (407 aa).

Residues 1–16 (MPRGQKSKLRARGKRR) are compositionally biased toward basic residues. The segment at 1–185 (MPRGQKSKLR…ESLSSSKRAA (185 aa)) is disordered. Polar residues-rich tracts occupy residues 56-68 (SGSSVPQESQGAS) and 94-109 (PSTSRDASVSQESQGA). Positions 123–132 (KSDEAAKGQN) are enriched in basic and acidic residues. The span at 133–155 (EKSPSTSRDASVPQESQGASPTG) shows a compositional bias: polar residues. The region spanning 195–394 (IKRKANKMVQ…GLYPHLYEDA (200 aa)) is the MAGE domain.

In Homo sapiens (Human), this protein is Melanoma-associated antigen B6B.